The chain runs to 565 residues: Sulfite reductase [NADPH] hemoprotein beta-component (565 aa).

[4Fe-4S] cluster is bound by residues Cys429, Cys435, Cys474, and Cys478. Residue Cys478 coordinates siroheme.

It belongs to the nitrite and sulfite reductase 4Fe-4S domain family. As to quaternary structure, alpha(8)-beta(8). The alpha component is a flavoprotein, the beta component is a hemoprotein. It depends on siroheme as a cofactor. [4Fe-4S] cluster serves as cofactor.

It carries out the reaction hydrogen sulfide + 3 NADP(+) + 3 H2O = sulfite + 3 NADPH + 4 H(+). It functions in the pathway sulfur metabolism; hydrogen sulfide biosynthesis; hydrogen sulfide from sulfite (NADPH route): step 1/1. Component of the sulfite reductase complex that catalyzes the 6-electron reduction of sulfite to sulfide. This is one of several activities required for the biosynthesis of L-cysteine from sulfate. The chain is Sulfite reductase [NADPH] hemoprotein beta-component from Shewanella halifaxensis (strain HAW-EB4).